Here is a 146-residue protein sequence, read N- to C-terminus: Transcriptional regulator MraZ (146 aa).

SpoVT-AbrB domains lie at 9 to 55 and 81 to 124; these read TSAL…PRPV and AMDV…DAQR.

The protein belongs to the MraZ family. Forms oligomers.

It localises to the cytoplasm. The protein localises to the nucleoid. The protein is Transcriptional regulator MraZ of Leptothrix cholodnii (strain ATCC 51168 / LMG 8142 / SP-6) (Leptothrix discophora (strain SP-6)).